The following is a 325-amino-acid chain: DNA-directed RNA polymerase subunit alpha (325 aa).

The interval 1-231 (MQNSLLKPRI…DQLNVFAALE (231 aa)) is alpha N-terminal domain (alpha-NTD). Residues 246-325 (VDPILLRPVD…ENWPPAGLEK (80 aa)) are alpha C-terminal domain (alpha-CTD).

Belongs to the RNA polymerase alpha chain family. In terms of assembly, homodimer. The RNAP catalytic core consists of 2 alpha, 1 beta, 1 beta' and 1 omega subunit. When a sigma factor is associated with the core the holoenzyme is formed, which can initiate transcription.

The enzyme catalyses RNA(n) + a ribonucleoside 5'-triphosphate = RNA(n+1) + diphosphate. In terms of biological role, DNA-dependent RNA polymerase catalyzes the transcription of DNA into RNA using the four ribonucleoside triphosphates as substrates. The protein is DNA-directed RNA polymerase subunit alpha of Janthinobacterium sp. (strain Marseille) (Minibacterium massiliensis).